A 490-amino-acid polypeptide reads, in one-letter code: Aspartyl/glutamyl-tRNA(Asn/Gln) amidotransferase subunit B (490 aa).

This sequence belongs to the GatB/GatE family. GatB subfamily. As to quaternary structure, heterotrimer of A, B and C subunits.

The enzyme catalyses L-glutamyl-tRNA(Gln) + L-glutamine + ATP + H2O = L-glutaminyl-tRNA(Gln) + L-glutamate + ADP + phosphate + H(+). It carries out the reaction L-aspartyl-tRNA(Asn) + L-glutamine + ATP + H2O = L-asparaginyl-tRNA(Asn) + L-glutamate + ADP + phosphate + 2 H(+). In terms of biological role, allows the formation of correctly charged Asn-tRNA(Asn) or Gln-tRNA(Gln) through the transamidation of misacylated Asp-tRNA(Asn) or Glu-tRNA(Gln) in organisms which lack either or both of asparaginyl-tRNA or glutaminyl-tRNA synthetases. The reaction takes place in the presence of glutamine and ATP through an activated phospho-Asp-tRNA(Asn) or phospho-Glu-tRNA(Gln). The sequence is that of Aspartyl/glutamyl-tRNA(Asn/Gln) amidotransferase subunit B from Prochlorococcus marinus (strain MIT 9312).